The following is a 380-amino-acid chain: Protein GOLM2 (380 aa).

Met-1 is modified (N-acetylmethionine). Residues 1-14 (MVGFGANRRAGRLP) are Cytoplasmic-facing. A helical; Signal-anchor for type II membrane protein membrane pass occupies residues 15-35 (SLVLAVLLVVIAVLAFNYWSI). Positions 35 to 195 (ISSRHVLLQE…QFLQEQKQEA (161 aa)) form a coiled coil. At 36 to 380 (SSRHVLLQEE…YGKQRFNDAL (345 aa)) the chain is on the lumenal side. Basic and acidic residues-rich tracts occupy residues 192-212 (KQEAHKFESKGGNELDTDNHA) and 227-247 (KNEEPSSHHIPHGKEQIKRGG). Residues 192–254 (KQEAHKFESK…RGGDAGMPGI (63 aa)) are disordered. A phosphoserine mark is found at Ser-233 and Ser-275. Positions 280 to 380 (ESHQVISHLP…YGKQRFNDAL (101 aa)) are disordered. The span at 305–321 (NHNGNSRTSKQNPSNPL) shows a compositional bias: polar residues. Positions 344–380 (ATKDRAGDFHKLKQNDEERELQMDPADYGKQRFNDAL) are enriched in basic and acidic residues.

This sequence belongs to the GOLM family.

The protein localises to the membrane. This Bos taurus (Bovine) protein is Protein GOLM2 (GOLM2).